We begin with the raw amino-acid sequence, 509 residues long: Protein Jade-1 (509 aa).

The disordered stretch occupies residues 1–45 (MKRGRLPSSSEDSDDNGSLSTTWSQNSRSQHRRSSCSRPEDRKPS). Residues 60 to 80 (DSYQLNPDEYYVLADPWRQEW) form an interaction with KAT7/HBO1 and histones region. The interaction with histones stretch occupies residues 80–188 (WEKGVQVPVS…EQRCYDNMNH (109 aa)). A Phosphoserine modification is found at S89. T92 bears the Phosphothreonine mark. A Glycyl lysine isopeptide (Lys-Gly) (interchain with G-Cter in SUMO2) cross-link involves residue K114. The PHD-type 1 zinc-finger motif lies at 203–253 (YVVCDVCQSPDGEDGNEMVFCDKCNICVHQACYGILKVPEGSWLCRTCALG). The C2HC pre-PHD-type zinc finger occupies 255 to 289 (QPKCLLCPKKGGAMKPTRSGTKWVHVSCALWIPEV). The PHD-type 2 zinc-finger motif lies at 313-369 (LVCSLCNEKFGASIQCSVKNCRTAFHVTCAFDRGLEMKTILAENDEVKFKSYCPKHS). Residues 373-399 (KAEEGLGEGTAQENGAPECSPRDPLEP) are disordered.

The protein belongs to the JADE family. In terms of assembly, component of the HBO1 complex composed at least of ING4 or ING5, KAT7/HBO1, MEAF6, and one of JADE1, JADE2 and JADE3. Interacts with NPHP4.

The protein localises to the nucleus. Its subcellular location is the chromosome. It is found in the cytoplasm. The protein resides in the cytoskeleton. It localises to the cilium basal body. Scaffold subunit of some HBO1 complexes, which have a histone H4 acetyltransferase activity. Plays a key role in HBO1 complex by directing KAT7/HBO1 specificity towards histone H4 acetylation (H4K5ac, H4K8ac and H4K12ac), regulating DNA replication initiation, regulating DNA replication initiation. May also promote acetylation of nucleosomal histone H4 by KAT5. Promotes apoptosis. May act as a renal tumor suppressor. Negatively regulates canonical Wnt signaling; at least in part, cooperates with NPHP4 in this function. This Bos taurus (Bovine) protein is Protein Jade-1 (JADE1).